Here is a 71-residue protein sequence, read N- to C-terminus: Sec-independent protein translocase protein TatA (71 aa).

Residues 1–21 (MGSFSMGHWLIVLAIIVLLFG) form a helical membrane-spanning segment. Basic and acidic residues predominate over residues 41 to 57 (KEMEDETPVEKIEKADS). The tract at residues 41–71 (KEMEDETPVEKIEKADSETQSTKQNETTKNV) is disordered. Over residues 58 to 71 (ETQSTKQNETTKNV) the composition is skewed to polar residues.

Belongs to the TatA/E family. The Tat system comprises two distinct complexes: a TatABC complex, containing multiple copies of TatA, TatB and TatC subunits, and a separate TatA complex, containing only TatA subunits. Substrates initially bind to the TatABC complex, which probably triggers association of the separate TatA complex to form the active translocon.

The protein localises to the cell inner membrane. Its function is as follows. Part of the twin-arginine translocation (Tat) system that transports large folded proteins containing a characteristic twin-arginine motif in their signal peptide across membranes. TatA could form the protein-conducting channel of the Tat system. The chain is Sec-independent protein translocase protein TatA from Campylobacter fetus subsp. fetus (strain 82-40).